Here is a 221-residue protein sequence, read N- to C-terminus: MDGFEIASELLQASHHLPVLGTGSPSGSDIISGNYMLGYSADDANLSQFEQLEGLLGSPTVANHVDFGKETADLAFLDDSGGILSSVELAGMVSPPLDAVVPMPGITRASRSRPAFSTPASRPGLSSAKSPSLGATSPGSMDRSEEVKQLRKKYHEKYKERNRLAAGRSRQKQADLINLLQAEQQEEERRRKALELEIANMQKELVDMKQELQHHIRISNC.

The tract at residues 109 to 146 (ASRSRPAFSTPASRPGLSSAKSPSLGATSPGSMDRSEE) is disordered. Residues 127–139 (SAKSPSLGATSPG) are compositionally biased toward polar residues. Residues 152-192 (KKYHEKYKERNRLAAGRSRQKQADLINLLQAEQQEEERRRK) form a basic motif region. The region spanning 152–215 (KKYHEKYKER…VDMKQELQHH (64 aa)) is the bZIP domain. The tract at residues 198-212 (IANMQKELVDMKQEL) is leucine-zipper.

The protein localises to the nucleus. Transcription factor; part of the gene cluster that mediates the biosynthesis of ochratoxin A (OTA), a mycotoxin demonstrated to have nephrotoxic, immunotoxic, genotoxic, neurotoxic, and teratogenic properties. Positively regulates the expression of the OTA biosynthetic genes and subsequent production of OTA. Probably binds to conserved 5'-ACGT-3' bZIP binding motifs found in multiple copies (3 to 4) in the promoters of the OTA biosynthetic genes. Acts not only as a pathway-specific regulator of the OTA cluster but also binds at other chromosomal positions outside the OTA cluster and can act as a broad regulator. Negatively regulates pathogenicity and plays a critical role in tolerance to reactive oxygen species (ROS). The protein is Transcription factor otaR1 of Aspergillus niger (strain ATCC MYA-4892 / CBS 513.88 / FGSC A1513).